Here is a 353-residue protein sequence, read N- to C-terminus: Protein arginine N-methyltransferase 1 (353 aa).

The SAM-dependent MTase PRMT-type domain maps to 32–353 (KDYYFDSYAH…LSCSTDYRMR (322 aa)). S-adenosyl-L-methionine-binding residues include His-45, Arg-54, Gly-78, and Glu-100. Lys-116 bears the N6-succinyllysine mark. Lys-127 is covalently cross-linked (Glycyl lysine isopeptide (Lys-Gly) (interchain with G-Cter in ubiquitin)). Glu-129 is an S-adenosyl-L-methionine binding site. Residues Glu-144 and Glu-153 contribute to the active site. Lys-210 and Lys-215 each carry N6-acetyllysine. A phosphoserine mark is found at Ser-286 and Ser-289.

Belongs to the class I-like SAM-binding methyltransferase superfamily. Protein arginine N-methyltransferase family. In terms of assembly, homodimer and heterodimer with PRMT8. Homooctamer; individual homodimers associates to form a homooctamer. Interacts with NFATC2IP. Interacts with ILF3 and SUPT5H. Individual homodimers can associate to form a homohexamer. Interacts with FOXO1; the interaction methylates FOXO1, retaining it in the nucleus and increasing its transcriptional activity. Methylation of FOXO1 is increased with oxidative stress. Interacts with CHTOP; the interaction methylates CHTOP, enabling its interaction with the 5FMC complex. Interacts with BTG1, BTG2 and IFNAR1. Interacts with and probably methylates ATXN2L. Component of the methylosome, a 20S complex containing at least CLNS1A/pICln, PRMT5/SKB1, WDR77/MEP50, PRMT1 and ERH. Interacts with DHX9 (via RGG region). Interacts (via N-terminus) with HABP4. Interacts with MAP3K5/ASK1; the interaction results in MAP3K5 methylation by PRMT1 which inhibits MAP3K5 activation. Interacts with TRIM48; the interaction results in ubiquitination of PRMT1 by TRIM48, leading to PRMT1 proteasomal degradation and activation of MAP3K5. Interacts with GATOR1 complex; this interaction is S-adenosyl-L-methionine (SAM) dependent and is perturbated by SAMTOR in a SAM-sensitive manner. Interacts with GFI1; promoting recognition and binding of MRE11 and TP53BP1 substrates by PRMT1. In terms of processing, polyubiquitinated at Lys-127 by the SCF(FBXL17) complex, leading to its subsequent degradation. Ubiquitination is regulated by acetylation at Lys-210 and Lys-215. Polyubiquitinated by E3 ubiquitin-protein ligase TRIM48, leading to suppression of MAP3K5/ASK1 methylation and subsequent MAP3K5 activation. Post-translationally, acetylation at Lys-210 and Lys-215 regulates ubiquitination by the SCF(FBXL17) complex. Acetylated at Lys-215 by p300/EP300. Deacetylated at Lys-210 and Lys-215 by SIRT1. Ubiquitous.

Its subcellular location is the nucleus. The protein resides in the nucleoplasm. It is found in the cytoplasm. It localises to the cytosol. The protein localises to the lysosome membrane. The enzyme catalyses L-arginyl-[protein] + 2 S-adenosyl-L-methionine = N(omega),N(omega)-dimethyl-L-arginyl-[protein] + 2 S-adenosyl-L-homocysteine + 2 H(+). It carries out the reaction L-arginyl-[protein] + S-adenosyl-L-methionine = N(omega)-methyl-L-arginyl-[protein] + S-adenosyl-L-homocysteine + H(+). The catalysed reaction is N(omega)-methyl-L-arginyl-[protein] + S-adenosyl-L-methionine = N(omega),N(omega)-dimethyl-L-arginyl-[protein] + S-adenosyl-L-homocysteine + H(+). Its function is as follows. Arginine methyltransferase that methylates (mono and asymmetric dimethylation) the guanidino nitrogens of arginyl residues present in proteins such as ESR1, histone H2, H3 and H4, FMR1, ILF3, HNRNPA1, HNRNPD, NFATC2IP, SUPT5H, TAF15, EWS, HABP4, SERBP1, RBM15, FOXO1, CHTOP, MAP3K5/ASK1 and MICU1. Constitutes the main enzyme that mediates monomethylation and asymmetric dimethylation of histone H4 'Arg-3' (H4R3me1 and H4R3me2a, respectively), a specific tag for epigenetic transcriptional activation. May be involved in the regulation of TAF15 transcriptional activity, act as an activator of estrogen receptor (ER)-mediated transactivation, play a key role in neurite outgrowth and act as a negative regulator of megakaryocytic differentiation, by modulating p38 MAPK pathway. Methylates RBM15, promoting ubiquitination and degradation of RBM15. Methylates MRE11 and TP53BP1, promoting the DNA damage response. Methylates FOXO1 and retains it in the nucleus increasing its transcriptional activity. Methylates CHTOP and this methylation is critical for its 5-hydroxymethylcytosine (5hmC)-binding activity. Methylates MAP3K5/ASK1 at 'Arg-85' and 'Arg-87' which promotes association of MAP3K5 with thioredoxin and negatively regulates MAP3K5 association with TRAF2, inhibiting MAP3K5 stimulation and MAP3K5-induced activation of JNK. Methylates H4R3 in genes involved in glioblastomagenesis in a CHTOP- and/or TET1-dependent manner. Plays a role in regulating alternative splicing in the heart. Methylates NPRL2 at 'Arg-78' leading to inhibition of its GTPase activator activity and then the GATOR1 complex and consequently inducing timely mTORC1 activation under methionine-sufficient conditions. This chain is Protein arginine N-methyltransferase 1, found in Rattus norvegicus (Rat).